A 398-amino-acid chain; its full sequence is E3 ubiquitin-protein ligase RSL1 (398 aa).

The tract at residues 155-374 is TRIAD supradomain; sequence QKETCNICLN…LDLTQCCGSC (220 aa). Residues Cys-159, Cys-162, Cys-183, Cys-186, Cys-246, Cys-251, Cys-271, Cys-274, Cys-279, Cys-282, His-287, Cys-292, Cys-321, and Cys-324 each coordinate Zn(2+). Residues 159–207 form an RING-type 3; degenerate zinc finger; it reads CNICLNDDINADQMFSVDKSGHMCCSECVKRHIEVRLLEGSLITCPHYR. The segment at 159 to 208 adopts an RING-type 1 zinc-finger fold; the sequence is CNICLNDDINADQMFSVDKSGHMCCSECVKRHIEVRLLEGSLITCPHYRC. Residues 233–292 form an IBR-type zinc finger; the sequence is TKDELIPVMDRVYCPNPRCSTLMSETELSGLNIGVRRCCVKCGEPFCVKCKVSWHNNLSC. The RING-type 2; atypical zinc-finger motif lies at 321–349; it reads CSKCKHMIELSSGCISVVCRCGHTFCYQC. An RING-type 4; degenerate zinc finger spans residues 321 to 356; it reads CSKCKHMIELSSGCISVVCRCGHTFCYQCGADAGDC. Residue Cys-334 is part of the active site. Zn(2+) is bound by residues Cys-339, Cys-341, Cys-346, Cys-349, His-358, and Cys-370. A helical transmembrane segment spans residues 374-394; that stretch reads CCCFVFFLVIIAIVVTIILLV.

This sequence belongs to the RBR family. As to quaternary structure, interacts with the PYL4 and PYR1 ABA receptors at the plasma membrane. Zn(2+) is required as a cofactor.

It localises to the cell membrane. It is found in the vacuole membrane. It catalyses the reaction [E2 ubiquitin-conjugating enzyme]-S-ubiquitinyl-L-cysteine + [acceptor protein]-L-lysine = [E2 ubiquitin-conjugating enzyme]-L-cysteine + [acceptor protein]-N(6)-ubiquitinyl-L-lysine.. It functions in the pathway protein modification; protein ubiquitination. Functionally, acts as an E3 ubiquitin-protein ligase, or as part of E3 complex, which accepts ubiquitin from specific E2 ubiquitin-conjugating enzymes and then transfers it to substrates. Negative regulator of the abscisic acid (ABA) signaling pathway which targets PYL4 and PYR1 ABA receptors in plasma membrane to promote their FREE1/FYVE1-dependent trafficking and degradation upon ubiquitynation; this process involves clathrin-mediated endocytosis and trafficking through the ESCRT pathway. Involved in the maintenance of seed longevity. May enhance gibberellins responses. The polypeptide is E3 ubiquitin-protein ligase RSL1 (Arabidopsis thaliana (Mouse-ear cress)).